Consider the following 56-residue polypeptide: uncharacterized protein (56 aa).

A helical transmembrane segment spans residues 2–22 (ILYIIVAISILLNIILGIKVI).

The protein resides in the membrane. This is an uncharacterized protein from Methanocaldococcus jannaschii (strain ATCC 43067 / DSM 2661 / JAL-1 / JCM 10045 / NBRC 100440) (Methanococcus jannaschii).